The sequence spans 230 residues: MSREESVSGANDVSSLYPPPPPYIKYFTSENVEKLKEYNERREEGESAENELDFLIPPPMPSSGSYRAFGSVWQIKDHLPDLETMGITQLYKKTSEGEAEVTDYQYKIKELRRLSYSLLLNFVELVGVLSVNPELYESKVENIRTILVNIHHLLNEYRPHQSRESLIMLLEEQLEHKKQEVANIELVCQQVTEKLKQVQTLLKESQSQSQSQSQSQSQSQSQSQLQSDSQ.

Disordered stretches follow at residues 1 to 22 (MSRE…PPPP) and 206 to 230 (QSQS…SDSQ).

The protein belongs to the Mediator complex subunit 7 family. In terms of assembly, component of the Mediator complex.

It is found in the nucleus. Functionally, component of the Mediator complex, a coactivator involved in the regulated transcription of nearly all RNA polymerase II-dependent genes. Mediator functions as a bridge to convey information from gene-specific regulatory proteins to the basal RNA polymerase II transcription machinery. Mediator is recruited to promoters by direct interactions with regulatory proteins and serves as a scaffold for the assembly of a functional preinitiation complex with RNA polymerase II and the general transcription factors. In Candida glabrata (strain ATCC 2001 / BCRC 20586 / JCM 3761 / NBRC 0622 / NRRL Y-65 / CBS 138) (Yeast), this protein is Mediator of RNA polymerase II transcription subunit 7 (MED7).